We begin with the raw amino-acid sequence, 257 residues long: GTP cyclohydrolase III (257 aa).

Belongs to the archaeal-type GTP cyclohydrolase family.

The enzyme catalyses GTP + 3 H2O = 2-amino-5-formylamino-6-(5-phospho-D-ribosylamino)pyrimidin-4(3H)-one + 2 phosphate + 2 H(+). In terms of biological role, catalyzes the formation of 2-amino-5-formylamino-6-ribofuranosylamino-4(3H)-pyrimidinone ribonucleotide monophosphate and inorganic phosphate from GTP. Also has an independent pyrophosphate phosphohydrolase activity. This is GTP cyclohydrolase III from Halorubrum lacusprofundi (strain ATCC 49239 / DSM 5036 / JCM 8891 / ACAM 34).